The primary structure comprises 103 residues: UPF0473 protein LVIS_1220 (103 aa).

This sequence belongs to the UPF0473 family.

The chain is UPF0473 protein LVIS_1220 from Levilactobacillus brevis (strain ATCC 367 / BCRC 12310 / CIP 105137 / JCM 1170 / LMG 11437 / NCIMB 947 / NCTC 947) (Lactobacillus brevis).